Here is a 131-residue protein sequence, read N- to C-terminus: MNKLTLLLKFLIQAFMWFAIASEFVSLLYEIFHSLKENYFLGLETHKILVKVLNVIIIYELFTTLLIALEERRIKLILIIDTAMIFFIRELLIVLFTYKKLELSEGIASALILGTLGILRFLYLKYKIDVE.

4 helical membrane-spanning segments follow: residues 7–29 (LLKF…SLLY), 49–69 (LVKV…LIAL), 76–98 (LILI…LFTY), and 102–124 (ELSE…FLYL).

It is found in the cell membrane. This is an uncharacterized protein from Aquifex aeolicus (strain VF5).